The primary structure comprises 1146 residues: Lysine-specific demethylase 2A (1146 aa).

The region spanning 146-314 (FSHTKLENLV…MQLRIYSIED (169 aa)) is the JmjC domain. A substrate-binding site is contributed by Thr207. Positions 210 and 212 each coordinate Fe cation. Lys227 serves as a coordination point for substrate. Fe cation is bound at residue His282. Disordered stretches follow at residues 363–467 (LNGR…PDSP) and 554–585 (TKPH…SSGA). A compositionally biased stretch (low complexity) spans 373–387 (SSSSSSSSSGLSSSS). Positions 388–401 (DNDDSSDQDWEEEE) are enriched in acidic residues. The segment covering 402-442 (GLRKRERDRCRVERELQRKRNRDRQQRDQERDRHGRTERII) has biased composition (basic and acidic residues). The segment covering 453 to 467 (LTPPPSLPLPTPDSP) has biased composition (pro residues). Over residues 566-584 (STAPPRTSGTPSGTTASSG) the composition is skewed to low complexity. The segment at 585–631 (ARRRRVRCRKCQACVQRECGTCHYCKDMKKFGGPGRMKQSCVLRQCL) adopts a CXXC-type zinc-finger fold. Zn(2+) is bound by residues Cys592, Cys595, Cys598, Cys603, Cys606, Cys609, Cys625, and Cys630. Residues 638–699 (SVTCALCGEV…YWECPKCYEG (62 aa)) form a PHD-type zinc finger. Disordered regions lie at residues 733 to 800 (VLRP…EGDR) and 832 to 867 (TPNP…ENVM). Residues 739–762 (GQSPPSPPLLLLPPSPSSAPPTPP) show a composition bias toward pro residues. Over residues 772–789 (SREERAKRRQLAREKENH) the composition is skewed to basic and acidic residues. A compositionally biased stretch (acidic residues) spans 849–864 (EREEEEEEEEEEEETE). One can recognise an F-box domain in the interval 874–919 (STSMQKDVWLSVFHYLTHEELCICMRVCKAWYKWGCDKRLWSRIDV). LRR repeat units follow at residues 945–966 (WTNV…LKDL), 968–994 (LAGC…DLRW), 1032–1057 (GLDI…DLSH), 1058–1087 (CPLL…HLAG), 1088–1112 (CKGV…DLHG), and 1113–1138 (CKQV…CLSD).

It belongs to the JHDM1 histone demethylase family. Fe(2+) serves as cofactor.

It localises to the nucleus. The protein localises to the nucleoplasm. It catalyses the reaction N(6),N(6)-dimethyl-L-lysyl(36)-[histone H3] + 2 2-oxoglutarate + 2 O2 = L-lysyl(36)-[histone H3] + 2 formaldehyde + 2 succinate + 2 CO2. Its function is as follows. Histone demethylase that specifically demethylates 'Lys-36' of histone H3, thereby playing a central role in histone code. Preferentially demethylates dimethylated H3 'Lys-36' residue while it has weak or no activity for mono- and tri-methylated H3 'Lys-36'. May also recognize and bind to some phosphorylated proteins and promote their ubiquitination and degradation. Required to maintain the heterochromatic state. Associates with centromeres and represses transcription of small non-coding RNAs that are encoded by the clusters of satellite repeats at the centromere. Required to sustain centromeric integrity and genomic stability, particularly during mitosis. May play a role in the regulation of circadian gene expression. The polypeptide is Lysine-specific demethylase 2A (kdm2a) (Xenopus tropicalis (Western clawed frog)).